The chain runs to 74 residues: Protein krueppel (74 aa).

4 consecutive C2H2-type zinc fingers follow at residues 1–4 (ERTH), 10–32 (FECQ…MRLH), 38–60 (YRCE…LRVH), and 66–74 (YGCEHCSMK).

The protein belongs to the krueppel C2H2-type zinc-finger protein family.

Its subcellular location is the nucleus. Krueppel is a gap class segmentation protein. The polypeptide is Protein krueppel (Kr) (Tribolium castaneum (Red flour beetle)).